Reading from the N-terminus, the 321-residue chain is o-succinylbenzoate synthase (321 aa).

K110 acts as the Proton donor in catalysis. D138, E165, and D188 together coordinate Mg(2+). The active-site Proton acceptor is K212.

This sequence belongs to the mandelate racemase/muconate lactonizing enzyme family. MenC type 1 subfamily. The cofactor is a divalent metal cation.

It carries out the reaction (1R,6R)-6-hydroxy-2-succinyl-cyclohexa-2,4-diene-1-carboxylate = 2-succinylbenzoate + H2O. It functions in the pathway quinol/quinone metabolism; 1,4-dihydroxy-2-naphthoate biosynthesis; 1,4-dihydroxy-2-naphthoate from chorismate: step 4/7. The protein operates within quinol/quinone metabolism; menaquinone biosynthesis. Its function is as follows. Converts 2-succinyl-6-hydroxy-2,4-cyclohexadiene-1-carboxylate (SHCHC) to 2-succinylbenzoate (OSB). The protein is o-succinylbenzoate synthase of Mycolicibacterium smegmatis (strain ATCC 700084 / mc(2)155) (Mycobacterium smegmatis).